A 282-amino-acid polypeptide reads, in one-letter code: 2-dehydro-3-deoxyphosphooctonate aldolase (282 aa).

It belongs to the KdsA family.

The protein resides in the cytoplasm. The catalysed reaction is D-arabinose 5-phosphate + phosphoenolpyruvate + H2O = 3-deoxy-alpha-D-manno-2-octulosonate-8-phosphate + phosphate. Its pathway is carbohydrate biosynthesis; 3-deoxy-D-manno-octulosonate biosynthesis; 3-deoxy-D-manno-octulosonate from D-ribulose 5-phosphate: step 2/3. It participates in bacterial outer membrane biogenesis; lipopolysaccharide biosynthesis. The polypeptide is 2-dehydro-3-deoxyphosphooctonate aldolase (Shewanella amazonensis (strain ATCC BAA-1098 / SB2B)).